Here is a 152-residue protein sequence, read N- to C-terminus: Synaptobrevin (152 aa).

The span at 1–16 (MENNEAPSPSGSNNND) shows a compositional bias: polar residues. Residues 1 to 30 (MENNEAPSPSGSNNNDFPILPPPPNANDNY) form a disordered region. Residues 1–110 (MENNEAPSPS…KRKQWWANMK (110 aa)) are Cytoplasmic-facing. Residues 47-107 (KLQQTQAKVD…GKLKRKQWWA (61 aa)) enclose the v-SNARE coiled-coil homology domain. A helical; Anchor for type IV membrane protein transmembrane segment spans residues 111–130 (MMIILGVIAVVLLIIVLVSV). Topologically, residues 131 to 152 (WPSSSDSGSGGGNKAITQAPPH) are vesicular. The tract at residues 133–152 (SSSDSGSGGGNKAITQAPPH) is disordered.

It belongs to the synaptobrevin family. Part of the SNARE core complex containing Snap25 and syntaxin. In terms of processing, ubiquitinated by gzl, regulating endocytic trafficking. In wing imaginal disks, ubiquitination by gzl promotes transcytosis of wingless (wg) to the basolateral surface. In terms of tissue distribution, not nervous system-specific; abundant in cells of the gut and Malpighian tubules.

Its subcellular location is the cytoplasmic vesicle. The protein resides in the secretory vesicle. It is found in the synaptic vesicle membrane. It localises to the cell membrane. Functionally, involved in the targeting and/or fusion of transport vesicles to their target membrane. The polypeptide is Synaptobrevin (Drosophila melanogaster (Fruit fly)).